Here is a 217-residue protein sequence, read N- to C-terminus: 3,4-dihydroxy-2-butanone 4-phosphate synthase (217 aa).

Residues 37-38 (RE), Asp42, 150-154 (RGGHT), and Glu174 contribute to the D-ribulose 5-phosphate site. Glu38 serves as a coordination point for Mg(2+). His153 contributes to the Mg(2+) binding site.

Belongs to the DHBP synthase family. Homodimer. Requires Mg(2+) as cofactor. Mn(2+) serves as cofactor.

The enzyme catalyses D-ribulose 5-phosphate = (2S)-2-hydroxy-3-oxobutyl phosphate + formate + H(+). It participates in cofactor biosynthesis; riboflavin biosynthesis; 2-hydroxy-3-oxobutyl phosphate from D-ribulose 5-phosphate: step 1/1. In terms of biological role, catalyzes the conversion of D-ribulose 5-phosphate to formate and 3,4-dihydroxy-2-butanone 4-phosphate. This is 3,4-dihydroxy-2-butanone 4-phosphate synthase from Proteus mirabilis (strain HI4320).